The primary structure comprises 82 residues: uncharacterized protein (82 aa).

The next 2 helical transmembrane spans lie at leucine 8 to proline 28 and leucine 50 to leucine 70.

It is found in the cell membrane. This is an uncharacterized protein from Klebsiella pneumoniae.